Here is a 226-residue protein sequence, read N- to C-terminus: Small ribosomal subunit protein uS2c (226 aa).

Belongs to the universal ribosomal protein uS2 family.

The protein resides in the plastid. The protein localises to the chloroplast. The protein is Small ribosomal subunit protein uS2c (rps2) of Ostreococcus tauri.